The following is a 787-amino-acid chain: Endonuclease MutS2 (787 aa).

334–341 (GPNTGGKT) serves as a coordination point for ATP. The interval 685-709 (KAQDPAKSAKQPRASVKRSGSSGMS) is disordered. One can recognise a Smr domain in the interval 712-787 (LDLRGHRYEE…GDGSTVVHFK (76 aa)).

It belongs to the DNA mismatch repair MutS family. MutS2 subfamily. In terms of assembly, homodimer. Binds to stalled ribosomes, contacting rRNA.

Endonuclease that is involved in the suppression of homologous recombination and thus may have a key role in the control of bacterial genetic diversity. Functionally, acts as a ribosome collision sensor, splitting the ribosome into its 2 subunits. Detects stalled/collided 70S ribosomes which it binds and splits by an ATP-hydrolysis driven conformational change. Acts upstream of the ribosome quality control system (RQC), a ribosome-associated complex that mediates the extraction of incompletely synthesized nascent chains from stalled ribosomes and their subsequent degradation. Probably generates substrates for RQC. The chain is Endonuclease MutS2 from Levilactobacillus brevis (strain ATCC 367 / BCRC 12310 / CIP 105137 / JCM 1170 / LMG 11437 / NCIMB 947 / NCTC 947) (Lactobacillus brevis).